A 130-amino-acid polypeptide reads, in one-letter code: NADH-quinone oxidoreductase subunit A (130 aa).

3 helical membrane-spanning segments follow: residues 17–37 (YIFV…MLAL), 74–94 (LVGI…PWAV), and 99–119 (LGPA…VGFV).

Belongs to the complex I subunit 3 family. In terms of assembly, NDH-1 is composed of 14 different subunits. Subunits NuoA, H, J, K, L, M, N constitute the membrane sector of the complex.

Its subcellular location is the cell inner membrane. It catalyses the reaction a quinone + NADH + 5 H(+)(in) = a quinol + NAD(+) + 4 H(+)(out). In terms of biological role, NDH-1 shuttles electrons from NADH, via FMN and iron-sulfur (Fe-S) centers, to quinones in the respiratory chain. The immediate electron acceptor for the enzyme in this species is believed to be ubiquinone. Couples the redox reaction to proton translocation (for every two electrons transferred, four hydrogen ions are translocated across the cytoplasmic membrane), and thus conserves the redox energy in a proton gradient. This is NADH-quinone oxidoreductase subunit A from Neorickettsia sennetsu (strain ATCC VR-367 / Miyayama) (Ehrlichia sennetsu).